The chain runs to 304 residues: UDP-N-acetylenolpyruvoylglucosamine reductase (304 aa).

The region spanning 33–198 (RVGGPADILV…IEATIELESG (166 aa)) is the FAD-binding PCMH-type domain. Arg-177 is a catalytic residue. Ser-227 (proton donor) is an active-site residue. Residue Glu-297 is part of the active site.

This sequence belongs to the MurB family. Requires FAD as cofactor.

The protein resides in the cytoplasm. It catalyses the reaction UDP-N-acetyl-alpha-D-muramate + NADP(+) = UDP-N-acetyl-3-O-(1-carboxyvinyl)-alpha-D-glucosamine + NADPH + H(+). It participates in cell wall biogenesis; peptidoglycan biosynthesis. Its function is as follows. Cell wall formation. The sequence is that of UDP-N-acetylenolpyruvoylglucosamine reductase from Clostridium perfringens (strain SM101 / Type A).